We begin with the raw amino-acid sequence, 638 residues long: MEQQQNSYDENQIQVLEGLEAVRKRPGMYIGSTNSKGLHHLVWEIVDNSIDEALAGYCTDINIQIEKDNSITVVDNGRGIPVGIHEKMGRPAVEVIMTVLHAGGKFDGSGYKVSGGLHGVGASVVNALSTELDVTVHRDGKIHRQTYKRGVPVTDLEIIGETDHTGTTTHFVPDPEIFSETTEYDYDLLANRVRELAFLTKGVNITIEDKREGQERKNEYHYEGGIKSYVEYLNRSKEVVHEEPIYIEGEKDGITVEVALQYNDSYTSNIYSFTNNINTYEGGTHEAGFKTGLTRVINDYARKKGLIKENDPNLSGDDVREGLTAIISIKHPDPQFEGQTKTKLGNSEARTITDTLFSTAMETFMLENPDAAKKIVDKGLMAARARMAAKKARELTRRKSALEISNLPGKLADCSSKDPSISELYIVEGDSAGGSAKQGRDRHFQAILPLRGKILNVEKARLDKILSNNEVRSMITALGTGIGEDFNLEKARYHKVVIMTDADVDGAHIRTLLLTFFYRYMRQIIENGYVYIAQPPLYKVQQGKRVEYAYNDKELEELLKTLPQTPKPGLQRYKGLGEMNATQLWETTMDPSSRTLLQVTLEDAMDADETFEMLMGDKVEPRRNFIEANARYVKNLDI.

The 115-residue stretch at 422-536 (SELYIVEGDS…NGYVYIAQPP (115 aa)) folds into the Toprim domain. Positions 428, 501, and 503 each coordinate Mg(2+).

It belongs to the type II topoisomerase GyrB family. Heterotetramer, composed of two GyrA and two GyrB chains. In the heterotetramer, GyrA contains the active site tyrosine that forms a transient covalent intermediate with DNA, while GyrB binds cofactors and catalyzes ATP hydrolysis. Mg(2+) serves as cofactor. Mn(2+) is required as a cofactor. It depends on Ca(2+) as a cofactor.

The protein resides in the cytoplasm. The enzyme catalyses ATP-dependent breakage, passage and rejoining of double-stranded DNA.. Functionally, a type II topoisomerase that negatively supercoils closed circular double-stranded (ds) DNA in an ATP-dependent manner to modulate DNA topology and maintain chromosomes in an underwound state. Negative supercoiling favors strand separation, and DNA replication, transcription, recombination and repair, all of which involve strand separation. Also able to catalyze the interconversion of other topological isomers of dsDNA rings, including catenanes and knotted rings. Type II topoisomerases break and join 2 DNA strands simultaneously in an ATP-dependent manner. In Bacillus subtilis (strain 168), this protein is DNA gyrase subunit B.